The following is a 200-amino-acid chain: NAD(P)H dehydrogenase (quinone) (200 aa).

The Flavodoxin-like domain occupies 7 to 199 (LAIVFYSSTG…RQVELTAKLL (193 aa)). FMN-binding positions include 13-18 (SSTGTG), 86-88 (TRF), 121-127 (SAQNVNG), and H142.

This sequence belongs to the WrbA family. In terms of assembly, homotetramer. It depends on FMN as a cofactor.

The catalysed reaction is a quinone + NADH + H(+) = a quinol + NAD(+). It carries out the reaction a quinone + NADPH + H(+) = a quinol + NADP(+). This is NAD(P)H dehydrogenase (quinone) from Deinococcus radiodurans (strain ATCC 13939 / DSM 20539 / JCM 16871 / CCUG 27074 / LMG 4051 / NBRC 15346 / NCIMB 9279 / VKM B-1422 / R1).